We begin with the raw amino-acid sequence, 112 residues long: U-scoloptoxin(16)-Er5a (112 aa).

Residues 1–26 (MNTVSVVQFLAVGCAVFVLYGRGVFA) form the signal peptide.

The protein belongs to the scoloptoxin-16 family. Post-translationally, contains 2 disulfide bonds. In terms of tissue distribution, expressed by the venom gland.

It localises to the secreted. The protein is U-scoloptoxin(16)-Er5a of Ethmostigmus rubripes (Giant centipede).